We begin with the raw amino-acid sequence, 729 residues long: Palmitoyltransferase akr1 (729 aa).

A compositionally biased stretch (basic and acidic residues) spans 1–11 (MVHHDGADAHA). The tract at residues 1–28 (MVHHDGADAHAGHAAPAQPPMKSDTATP) is disordered. Topologically, residues 1–297 (MVHHDGADAH…DRRSFMTKFT (297 aa)) are cytoplasmic. ANK repeat units lie at residues 76-105 (EGIT…EINK), 110-139 (SVAT…DPLI), 143-172 (QGYN…PVDV), 176-205 (YGHT…SVHA), and 209-238 (QGFT…DRFA). 2 helical membrane-spanning segments follow: residues 298 to 318 (FLWP…MPVF) and 319 to 339 (VGIP…QQVI). Topologically, residues 340-354 (AYAPPDMRQLQKTPW) are cytoplasmic. A helical membrane pass occupies residues 355-375 (MAGIFAGSLFLCIMNWLLHIF). Residues 376 to 383 (GSTMFGQD) are Lumenal-facing. A helical membrane pass occupies residues 384-404 (SAVIPNLLFAFFISMTIWFYI). Residues 405–483 (RCMVDDPGFV…YNCIGVNNHR (79 aa)) are Cytoplasmic-facing. One can recognise a DHHC domain in the interval 440–490 (NFCVTCMIRTPLRSKHCRRCQRCVAKHDHHCPWVYNCIGVNNHRHFFFYLI). Catalysis depends on Cys470, which acts as the S-palmitoyl cysteine intermediate. The helical transmembrane segment at 484–504 (HFFFYLINLTLSVVTYDWLTY) threads the bilayer. Topologically, residues 505 to 534 (RYLSTLSETASDECNILAPSLCRIVNADTY) are lumenal. Residues 535-555 (SLLTAIWASLQLTWVSMLLFV) traverse the membrane as a helical segment. Topologically, residues 556 to 729 (QFVQVSSAMT…GYESVAGEEV (174 aa)) are cytoplasmic. Disordered stretches follow at residues 587–620 (STGA…HGHN) and 709–729 (TSGG…GEEV). Pro residues predominate over residues 592–603 (LNPPSLPAPGPS). The segment covering 611 to 620 (HGGRHAHGHN) has biased composition (basic residues).

This sequence belongs to the DHHC palmitoyltransferase family. AKR/ZDHHC17 subfamily.

It localises to the early endosome membrane. It is found in the golgi apparatus membrane. It carries out the reaction L-cysteinyl-[protein] + hexadecanoyl-CoA = S-hexadecanoyl-L-cysteinyl-[protein] + CoA. Its function is as follows. Palmitoyltransferase specific for casein kinase 1. In Neurospora crassa (strain ATCC 24698 / 74-OR23-1A / CBS 708.71 / DSM 1257 / FGSC 987), this protein is Palmitoyltransferase akr1 (ptr-1).